Reading from the N-terminus, the 764-residue chain is Protein FAR1-RELATED SEQUENCE 7 (764 aa).

Positions 42-118 (DYYNSYATRT…QKEHNHDLGG (77 aa)) constitute an FAR1 1 domain. Residues 119–144 (HIEEAQTTPRPSVQQRAPAPTKLGIS) are disordered. Positions 123 to 133 (AQTTPRPSVQQ) are enriched in polar residues. The 77-residue stretch at 204-280 (QFYQAYAEVV…NKDHNHDLEP (77 aa)) folds into the FAR1 2 domain. One can recognise an MULE domain in the interval 375 to 471 (AVVFDTSYRK…SAWQIRSKER (97 aa)). Residues 650–686 (HAVTFSASNLNASCSCQMFEYEGLLCRHILKVFNLLD) form an SWIM-type zinc finger.

The protein belongs to the FHY3/FAR1 family. In terms of tissue distribution, expressed in hypocotyls, rosette and cauline leaves, inflorescences stems, flowers and siliques.

Its subcellular location is the nucleus. In terms of biological role, putative transcription activator involved in regulating light control of development. This is Protein FAR1-RELATED SEQUENCE 7 (FRS7) from Arabidopsis thaliana (Mouse-ear cress).